A 57-amino-acid polypeptide reads, in one-letter code: UPF0434 protein swp_2279 (57 aa).

It belongs to the UPF0434 family.

The polypeptide is UPF0434 protein swp_2279 (Shewanella piezotolerans (strain WP3 / JCM 13877)).